The chain runs to 162 residues: Interleukin-15 (162 aa).

Positions 1 to 29 (MRISKPHLRITSIQCYVCLLLNTHFLTEA) are cleaved as a signal peptide. A propeptide spanning residues 30 to 48 (GIRVFILGCISAGIPKTEA) is cleaved from the precursor. Disulfide bonds link C83/C133 and C90/C136. 3 N-linked (GlcNAc...) asparagine glycosylation sites follow: N119, N127, and N143.

This sequence belongs to the IL-15/IL-21 family.

The protein resides in the secreted. Functionally, cytokine that plays a major role in the development of inflammatory and protective immune responses to microbial invaders and parasites by modulating immune cells of both the innate and adaptive immune systems. Stimulates the proliferation of natural killer cells, T-cells and B-cells and promotes the secretion of several cytokines. In monocytes, induces the production of IL8 and monocyte chemotactic protein 1/CCL2, two chemokines that attract neutrophils and monocytes respectively to sites of infection. Unlike most cytokines, which are secreted in soluble form, IL15 is expressed in association with its high affinity IL15RA on the surface of IL15-producing cells and delivers signals to target cells that express IL2RB and IL2RG receptor subunits. Binding to its receptor triggers the phosphorylation of JAK1 and JAK3 and the recruitment and subsequent phosphorylation of signal transducer and activator of transcription-3/STAT3 and STAT5. In mast cells, induces the rapid tyrosine phosphorylation of STAT6 and thereby controls mast cell survival and release of cytokines such as IL4. The polypeptide is Interleukin-15 (IL15) (Marmota himalayana (Himalayan marmot)).